Here is an 86-residue protein sequence, read N- to C-terminus: Large ribosomal subunit protein bL35m (86 aa).

The transit peptide at 1–18 directs the protein to the mitochondrion; sequence MLVVFQRVVRATVLVGRK. The tract at residues 45–69 is disordered; the sequence is RKHAGAQHLNRDTSSSTRARQRQWE.

Belongs to the bacterial ribosomal protein bL35 family. In terms of assembly, component of the mitochondrial large ribosomal subunit (mt-LSU). Mature yeast 74S mitochondrial ribosomes consist of a small (37S) and a large (54S) subunit. The 37S small subunit contains a 15S ribosomal RNA (15S mt-rRNA) and at least 32 different proteins. The 54S large subunit contains a 21S rRNA (21S mt-rRNA) and at least 45 different proteins.

It is found in the mitochondrion. Its function is as follows. Component of the mitochondrial ribosome (mitoribosome), a dedicated translation machinery responsible for the synthesis of mitochondrial genome-encoded proteins, including at least some of the essential transmembrane subunits of the mitochondrial respiratory chain. The mitoribosomes are attached to the mitochondrial inner membrane and translation products are cotranslationally integrated into the membrane. The sequence is that of Large ribosomal subunit protein bL35m (new15) from Schizosaccharomyces pombe (strain 972 / ATCC 24843) (Fission yeast).